A 409-amino-acid chain; its full sequence is Serine protease inhibitor 2 (409 aa).

Positions methionine 1–alanine 21 are cleaved as a signal peptide. Residues asparagine 294 and asparagine 324 are each glycosylated (N-linked (GlcNAc...) asparagine). The short motif at leucine 356 to alanine 360 is the Hinge region; required for binding to peptidase element.

It belongs to the serpin family. As to quaternary structure, forms a covalent heterodimer with protease CLIPB9; the interaction inhibits CLIPB9 protease activity. Forms a covalent heterodimer with protease CLIPB10; the interaction inhibits CLIPB10 catalytic activity. Interacts with CLIPB4 in the hemolymph of immune-challenged female mosquitoes; the interaction results in CLIPB4 inhibition. Post-translationally, protease CLIPB9 binds to SRPN2 via the hinge region resulting in the cleavage of the reactive bond. This leads to a conformational change in SRPN2 which traps CLIPB9 and distorts its active site, resulting in CLIPB9 inactivation.

Its subcellular location is the secreted. In terms of biological role, serine protease inhibitor that functions in the melanization-mediated immune response. By preventing the activation of phenoloxidases through the inhibiting of serine proteases CLIPB9, CLIPB10 and CLIPB4, negatively regulates melanization in the hemolymph. By preventing melanization, has a detrimental role during P.berghei parasite mediated-infection and invasion of the mosquito midgut. The polypeptide is Serine protease inhibitor 2 (Anopheles gambiae (African malaria mosquito)).